Here is a 432-residue protein sequence, read N- to C-terminus: Lecithin-cholesterol acyltransferase-like 1 (432 aa).

The helical transmembrane segment at 7 to 29 threads the bilayer; it reads HYSVVIAILVVVTMTSMCQAVGS. S209 acts as the Acyl-ester intermediate in catalysis. Residues D374 and H400 each act as charge relay system in the active site.

Belongs to the AB hydrolase superfamily. Lipase family.

It localises to the membrane. This chain is Lecithin-cholesterol acyltransferase-like 1 (LCAT1), found in Arabidopsis thaliana (Mouse-ear cress).